The following is a 172-amino-acid chain: MATPAYMSITGTKQGLITAGAFTEDSVGNTYQEGHEDQVMVQGFNHEVIIPRDPQSGQPTGQRVHKPVVITKVFDKASPLLLAALTSGERLTKVEIQWYRTSAAGTQEHYYTTVLEDAIIVDIKDYMHNCQDPGNAHFTHLEDVHFTYRKITWTHEVSGTSGSDDWRSPVAG.

This sequence belongs to the hcp1 family.

The protein resides in the secreted. The sequence is that of Major exported protein (hcpA) from Pseudomonas aeruginosa (strain ATCC 15692 / DSM 22644 / CIP 104116 / JCM 14847 / LMG 12228 / 1C / PRS 101 / PAO1).